Consider the following 366-residue polypeptide: Phospho-N-acetylmuramoyl-pentapeptide-transferase (366 aa).

The next 10 helical transmembrane spans lie at 27 to 47, 71 to 91, 93 to 113, 134 to 154, 174 to 194, 205 to 225, 245 to 265, 268 to 288, 294 to 314, and 343 to 363; these read AAMFTAALIVFLFGPKIIASL, TPTMGGLMILAGIVGSSLLWA, LSNVYVVATLLVTLGFGAIGF, LAIEFLIAGIAVFFMMEAAKI, ALLNVGYFFIVFGGFVIVSAG, GLAIVPVMIASAAFGLIAYLA, LAVILGSVIGAGLGFLWFNAP, AIFMGDTGSLALGGLIGTVAV, IVMVIIGGLFVMETLSVIIQV, and QVVIRFWIIAVGLAMLGLATL.

It belongs to the glycosyltransferase 4 family. MraY subfamily. Mg(2+) serves as cofactor.

It is found in the cell inner membrane. It carries out the reaction UDP-N-acetyl-alpha-D-muramoyl-L-alanyl-gamma-D-glutamyl-meso-2,6-diaminopimeloyl-D-alanyl-D-alanine + di-trans,octa-cis-undecaprenyl phosphate = di-trans,octa-cis-undecaprenyl diphospho-N-acetyl-alpha-D-muramoyl-L-alanyl-D-glutamyl-meso-2,6-diaminopimeloyl-D-alanyl-D-alanine + UMP. It participates in cell wall biogenesis; peptidoglycan biosynthesis. In terms of biological role, catalyzes the initial step of the lipid cycle reactions in the biosynthesis of the cell wall peptidoglycan: transfers peptidoglycan precursor phospho-MurNAc-pentapeptide from UDP-MurNAc-pentapeptide onto the lipid carrier undecaprenyl phosphate, yielding undecaprenyl-pyrophosphoryl-MurNAc-pentapeptide, known as lipid I. The chain is Phospho-N-acetylmuramoyl-pentapeptide-transferase from Allorhizobium ampelinum (strain ATCC BAA-846 / DSM 112012 / S4) (Agrobacterium vitis (strain S4)).